A 148-amino-acid chain; its full sequence is uncharacterized protein (148 aa).

3 helical membrane passes run 20 to 42, 52 to 74, and 118 to 135; these read YYSK…IANY, YFLM…VRCY, and IIRY…CTYI.

It is found in the cell membrane. This is an uncharacterized protein from Rickettsia prowazekii (strain Madrid E).